The chain runs to 282 residues: Pyrroline-5-carboxylate reductase (282 aa).

It belongs to the pyrroline-5-carboxylate reductase family.

The catalysed reaction is L-proline + NADP(+) = (S)-1-pyrroline-5-carboxylate + NADPH + 2 H(+). It catalyses the reaction L-proline + NAD(+) = (S)-1-pyrroline-5-carboxylate + NADH + 2 H(+). It participates in amino-acid biosynthesis; L-proline biosynthesis; L-proline from L-glutamate 5-semialdehyde: step 1/1. The polypeptide is Pyrroline-5-carboxylate reductase (pro3) (Schizosaccharomyces pombe (strain 972 / ATCC 24843) (Fission yeast)).